The sequence spans 368 residues: Alanine racemase (368 aa).

Lys-40 (proton acceptor; specific for D-alanine) is an active-site residue. The residue at position 40 (Lys-40) is an N6-(pyridoxal phosphate)lysine. Arg-134 is a substrate binding site. Tyr-263 (proton acceptor; specific for L-alanine) is an active-site residue. Met-310 contacts substrate.

It belongs to the alanine racemase family. Pyridoxal 5'-phosphate is required as a cofactor.

It catalyses the reaction L-alanine = D-alanine. It functions in the pathway amino-acid biosynthesis; D-alanine biosynthesis; D-alanine from L-alanine: step 1/1. Functionally, catalyzes the interconversion of L-alanine and D-alanine. May also act on other amino acids. This is Alanine racemase (alr) from Listeria monocytogenes serotype 4b (strain CLIP80459).